Consider the following 902-residue polypeptide: HTH-type transcriptional regulator MalT (902 aa).

39 to 46 (SPAGYGKT) is a binding site for ATP. Residues 830-895 (ELIRTSPLTQ…DAVQHAQQLL (66 aa)) enclose the HTH luxR-type domain. Residues 854–873 (NEQIAGELAVAATTIKTHIR) constitute a DNA-binding region (H-T-H motif).

It belongs to the MalT family. In terms of assembly, monomer in solution. Oligomerizes to an active state in the presence of the positive effectors ATP and maltotriose.

Activated by ATP and maltotriose, which are both required for DNA binding. Functionally, positively regulates the transcription of the maltose regulon whose gene products are responsible for uptake and catabolism of malto-oligosaccharides. Specifically binds to the promoter region of its target genes, recognizing a short DNA motif called the MalT box. This chain is HTH-type transcriptional regulator MalT, found in Salmonella dublin (strain CT_02021853).